A 1180-amino-acid polypeptide reads, in one-letter code: MARYKNPKSPAKLKQQIVLPTCKLDSNLVLLPGIIYNVTFSRFKAAALLYRYKDLVSQVSIINNLLNEYEFNPSKDSDSVEEDDMVTSPITISKVAVEGIEQFFKYEAAFKNSQGLVSEKDIAEVAPSNEFDWLTLAIKPNLEKIKEPSNAQIDPTEHNSVVTIARIVGIVDDTTNIKLTLQAITRGLKIAPKKKTRPNEQLLEVDWSSDIPELRRHFKSLKDSSLDLFKVIDKFIVDYRQALSINSANGNKSNLQITKPGSRYKGANGSSQKPGDLLTLNPLANALYLQLAGSKDFSKAFLSLQKLYGQFASDENLKVDTKSYLRLLDLTCGILPFPNHEKLKLLHKISIDDRGNELINMINQLIKIFDTLDGNNSFVNHWFYNEATNIQKANVVANQLKSIRLLLEGMTNKTRPISNRGNIKSFNNSENGNNNKTNGSGITSRRPKSNEDGGEVYDEEDDDEEDDELRAITNFIKYKLPNITTLSPDSKRLIIKDFKRIRASSQSPGGGGNSDFHVIRNYLEIVMDIPWDKYVTKFKSNKDIDLNFAKKQLDDDHYGLEHVKKRLIQYLVVLKLLGINAEKQISDFRKENQVPSPSSSGSNLATQNSLVPASSIVIANNDETSFAHKQAQNKVKTSIKESNIENQTNQSIQVTKYNKSPIIMLAGPPGTGKTSLAKSIASSLGRNFQRISLGGVKDESEIRGHRRTYVGAMPGLIIQALRKSRSMNPVILLDEIDKVIGGSSGVNKFNGDPSAALLEVLDPEQNTSFIDHYLGFPVDLSQVIFICTANEPHNLTRPLLDRLEMIEVSAYDYNEKLIIGRKYLLPRQVKRNGFPASDRIEEFVNIDDASMKKIIVDYTREAGVRNLERKLGTICRFKAVEYCEGLSGKSFYNPNVEEADLPKYLGIPYSSGDFSSIETTISNNSRVGIVNGLSYNSDGSGSVLVFETIGFDKRVGNPNSSNTGCSLVMTGRLGEVLMESGKIGLTFIKSLIYKNLIQAKEQPDDKYLIEKFNNLELNLHVPMGSISKDGPSAGITMATSFLSVILDKPVPADVAMTGEITLRGLVLPIGGVKEKMMGAHLNGNIRRMIVPRENRKDLIEEFSRSVEEAGDVVDSNLMNELLKDNEEADFKMDKVEKFYLKRYGIQIFYAREFYDVMKILWGEDDLLTKPKSNRILEYHL.

In terms of domain architecture, Lon N-terminal spans 19–366 (LPTCKLDSNL…ELINMINQLI (348 aa)). The interval 416–465 (PISNRGNIKSFNNSENGNNNKTNGSGITSRRPKSNEDGGEVYDEEDDDEE) is disordered. Positions 422–444 (NIKSFNNSENGNNNKTNGSGITS) are enriched in low complexity. Acidic residues predominate over residues 452-465 (DGGEVYDEEDDDEE). ATP is bound at residue 667–674 (GPPGTGKT). The region spanning 924–1163 (NSRVGIVNGL…YDVMKILWGE (240 aa)) is the Lon proteolytic domain. Active-site residues include Ser-1032 and Lys-1075.

Belongs to the peptidase S16 family.

It localises to the peroxisome matrix. It catalyses the reaction Hydrolysis of proteins in presence of ATP.. Functionally, ATP-dependent serine protease that mediates the selective degradation of misfolded and unassembled polypeptides in the peroxisomal matrix. Necessary for type 2 peroxisome targeting signal (PTS2)-containing protein processing and facilitates peroxisome matrix protein import. The chain is Lon protease homolog 2, peroxisomal from Scheffersomyces stipitis (strain ATCC 58785 / CBS 6054 / NBRC 10063 / NRRL Y-11545) (Yeast).